The chain runs to 486 residues: MAKITQTMISQLLAAVGGSSNVSKCGNCMTRLRLTLANNGVADQAVIKQIPGVMGVVESDEQFQIILGPGKAQQAAELMNKLIESVINGDVQEQAMASDTNDLSSVAAEQKKQMKSKQTSAVQRFLSKFATIFTPLIPGFIAAGLLLGFATLLEQMFVLEQTPSQFILDLIAYMKVFGKGLFAFLSILIGYNAQQAFGGSGVNGAILASLFVLGYNPDATSGIYSGMSEFFGYTIDPRGNIIGVLLAAIIGAQVERKVREYMPDDLDMILTSVVTLLIMGVVTFVVIMPIGGELFKGMSWLFLNLNDNPLGAAILAGLFLISVVFGIHQGFVPVYFALMEAQGFNSLFPILAMAGGGQVGASLALYFKAKKDAVLRTQVKGAIIPGILGIGEPLIYGVTLPRVKPFVTACIGGAAGGFFIGLVSYLGLPVGLNTVFGPSGIVAIPLMTSHSGIFAGMAVFVVGLLISYVVGFLATYFFGSKDVDLS.

The PTS EIIB type-1 domain occupies 1-89; that stretch reads MAKITQTMIS…NKLIESVING (89 aa). The active-site Phosphocysteine intermediate; for EIIB activity is Cys-28. Positions 127–486 constitute a PTS EIIC type-1 domain; it reads SKFATIFTPL…FFGSKDVDLS (360 aa). Helical transmembrane passes span 129–149, 170–190, 196–216, 230–250, 268–288, 312–332, 347–367, 381–401, 411–431, and 453–473; these read FATI…LLGF, LIAY…ILIG, AFGG…LGYN, FFGY…AAII, MILT…VVIM, AAIL…QGFV, LFPI…ALYF, GAII…VTLP, IGGA…LPVG, and IFAG…VGFL.

It is found in the cell inner membrane. The enzyme catalyses N-acetyl-beta-D-muramate(out) + N(pros)-phospho-L-histidyl-[protein] = N-acetyl-beta-D-muramate 6-phosphate(in) + L-histidyl-[protein]. In terms of biological role, the phosphoenolpyruvate-dependent sugar phosphotransferase system (sugar PTS), a major carbohydrate active transport system, catalyzes the phosphorylation of incoming sugar substrates concomitantly with their translocation across the cell membrane. This system is involved in N-acetylmuramic acid (MurNAc) transport, yielding cytoplasmic MurNAc-6-P. Is also able to take up anhydro-N-acetylmuramic acid (anhMurNAc), but cannot phosphorylate the carbon 6, probably because of the 1,6-anhydro ring. The sequence is that of PTS system N-acetylmuramic acid-specific EIIBC component (murP) from Vibrio vulnificus (strain YJ016).